We begin with the raw amino-acid sequence, 376 residues long: MTIATKVNTNKKDLDTIKVPELPSVAAVKAAIPEHCFVKDPLTSISYLIKDYVLLAGLYFAVPYIEHYLGWIGLLGWYWAMGIVGSALFCVGHDCGHGSFSDYEWLNDLCGHLAHAPILAPFWPWQKSHRQHHQYTSHVEKDKGHPWVTEEDYNNRTAIEKYFAVIPISGWLRWNPIYTIVGLPDGSHFWPWSRLFETTEDRVKCAVSGVACAICAYIAFVLCDYSVYTFVKYYYIPLLFQGLILVIITYLQHQNEDIEVYEADEWGFVRGQTQTIDRHWGFGLDNIMHNITNGHVAHHFFFTKIPHYHLLEATPAIKKALEPLKDTQYGYKREVNYNWFFKYLHYNVTLDYLTHKAKGVLQYRSGVEAAKAKKAQ.

4 consecutive transmembrane segments (helical) span residues 45–65, 69–89, 203–223, and 228–248; these read ISYL…VPYI, LGWI…SALF, VKCA…FVLC, and YTFV…LVII.

It belongs to the fatty acid desaturase type 1 family.

Its subcellular location is the membrane. It carries out the reaction (9Z)-octadecenoyl-CoA + 2 Fe(II)-[cytochrome b5] + O2 + 2 H(+) = (9Z,12Z)-octadecadienoyl-CoA + 2 Fe(III)-[cytochrome b5] + 2 H2O. The enzyme catalyses (9Z)-hexadecenoyl-CoA + 2 Fe(II)-[cytochrome b5] + O2 + 2 H(+) = (9Z,12Z)-hexadecadienoyl-CoA + 2 Fe(III)-[cytochrome b5] + 2 H2O. The catalysed reaction is (9Z,12Z)-octadecadienoyl-CoA + 2 Fe(II)-[cytochrome b5] + O2 + 2 H(+) = (9Z,12Z,15Z)-octadecatrienoyl-CoA + 2 Fe(III)-[cytochrome b5] + 2 H2O. It catalyses the reaction (9Z)-heptadecenoyl-CoA + 2 Fe(II)-[cytochrome b5] + O2 + 2 H(+) = (9Z,12Z)-heptadecadienoyl-CoA + 2 Fe(III)-[cytochrome b5] + 2 H2O. It carries out the reaction (9Z)-pentadecenoyl-CoA + 2 Fe(II)-[cytochrome b5] + O2 + 2 H(+) = (9Z,12Z)-pentadecadienoyl-CoA + 2 Fe(III)-[cytochrome b5] + 2 H2O. The enzyme catalyses (6Z,9Z,12Z)-octadecatrienoyl-CoA + 2 Fe(II)-[cytochrome b5] + O2 + 2 H(+) = (6Z,9Z,12Z,15Z)-octadecatetraenoyl-CoA + 2 Fe(III)-[cytochrome b5] + 2 H2O. The catalysed reaction is (9Z)-tetradecenoyl-CoA + 2 Fe(II)-[cytochrome b5] + O2 + 2 H(+) = (9Z,12Z)-tetradecadienoyl-CoA + 2 Fe(III)-[cytochrome b5] + 2 H2O. The protein operates within lipid metabolism; polyunsaturated fatty acid biosynthesis. Can function as a Delta(12)/Delta(15) bifunctional desaturase and behaves as a nu +3' desaturase. Introduces a double bond in the fatty acid chain three carbons away from an existing double bond to biosynthesize polyunsaturated fatty acids (PUFAs) endogenously (PUFAs are essential for membrane structure and many cellular and physiological processes). Acts on a number of substrates like oleoyl-CoA ((9Z)-octadecenoyl-CoA, 18:1n-9), palmitoleoyl-CoA ((9Z)-hexadecenoyl-CoA, 16:1n-7), and gamma-linolenoyl-CoA ((6Z,9Z,12Z)-octadecatrienoyl-CoA, 18:3n-6), to generate linoleoyl-CoA ((9Z,12Z)-octadecadienoyl-CoA, 18:2n-6), (9Z,12Z)-hexadecadienoyl-CoA (16:2n-4) and (6Z,9Z,12Z,15Z)-octadecatetraenoyl-CoA (18:4n-3) respectively. Unlike plants, Caenorhabditis elegans desaturases seem to use fatty acyl-CoAs as substrates. This Caenorhabditis elegans protein is Delta(12) fatty acid desaturase fat-2 (fat-2).